Consider the following 498-residue polypeptide: MEKYIMSLDQGTTSSRCIIFNKKGEVVSVAQKEFTQIYPKAGWVEHDPLEIWGKQAGVAGEALNIARISPEQIAGIGITNQRETTVVWNKRTGMPVYNAIVWQCRRTAGYCDELREKGLDKTIKEKTGLMLDAYFSATKIKWILDNVEGARELAEKGDLLFGNIDTWLIWNMTKGKIHVTDYTNASRTMLFNIHELKWDEELLEILDIPKSMLPEVKPSSCVYGETDEILFGVSIPISGDAGDQQAALFGQTCFNAGMAKNTYGTGCFLLMNTGEKAVDSKNGLLTTIAVGIDGKVEYALEGSIFIGGAVIQWLRDELRMVKTAQETEKYATEVEDNNGVYLVPAFVGIGAPYWDSYARGTILGLTRGAKKEHIIRAALESMAYQTHDVLKAMEEDSGIELKALKVDGGACQNNFLMQFQSDILGVEVDRPEVVETTALGAAYLAGLAVGYWKDRNEISQNWAISRSFAPAMEDEKKEKLIKGWHKAVTKAMDWEERE.

Residue T12 participates in ADP binding. Positions 12, 13, and 14 each coordinate ATP. A sn-glycerol 3-phosphate-binding site is contributed by T12. R16 provides a ligand contact to ADP. Residues R82, E83, Y134, and D243 each coordinate sn-glycerol 3-phosphate. Positions 82, 83, 134, 243, and 244 each coordinate glycerol. ADP contacts are provided by T265 and G308. 4 residues coordinate ATP: T265, G308, Q312, and G409. Positions 409 and 413 each coordinate ADP.

The protein belongs to the FGGY kinase family. In terms of assembly, homotetramer and homodimer (in equilibrium).

It catalyses the reaction glycerol + ATP = sn-glycerol 3-phosphate + ADP + H(+). It functions in the pathway polyol metabolism; glycerol degradation via glycerol kinase pathway; sn-glycerol 3-phosphate from glycerol: step 1/1. With respect to regulation, activated by phosphorylation and inhibited by fructose 1,6-bisphosphate (FBP). Key enzyme in the regulation of glycerol uptake and metabolism. Catalyzes the phosphorylation of glycerol to yield sn-glycerol 3-phosphate. This chain is Glycerol kinase, found in Clostridium botulinum (strain Okra / Type B1).